The sequence spans 265 residues: Undecaprenyl-diphosphatase (265 aa).

7 helical membrane-spanning segments follow: residues 42 to 62, 82 to 102, 108 to 128, 143 to 163, 181 to 201, 221 to 241, and 248 to 264; these read ATTF…VLYW, GIML…AAHS, LFTP…MLLV, MSPA…WPGF, GLAA…ATGY, GFVV…ALVG, and FAWY…YFMA.

It belongs to the UppP family.

The protein localises to the cell inner membrane. The catalysed reaction is di-trans,octa-cis-undecaprenyl diphosphate + H2O = di-trans,octa-cis-undecaprenyl phosphate + phosphate + H(+). Catalyzes the dephosphorylation of undecaprenyl diphosphate (UPP). Confers resistance to bacitracin. This chain is Undecaprenyl-diphosphatase, found in Nitratidesulfovibrio vulgaris (strain ATCC 29579 / DSM 644 / CCUG 34227 / NCIMB 8303 / VKM B-1760 / Hildenborough) (Desulfovibrio vulgaris).